Reading from the N-terminus, the 371-residue chain is Putative glutamate--cysteine ligase 2 (371 aa).

This sequence belongs to the glutamate--cysteine ligase type 2 family. YbdK subfamily.

The catalysed reaction is L-cysteine + L-glutamate + ATP = gamma-L-glutamyl-L-cysteine + ADP + phosphate + H(+). Functionally, ATP-dependent carboxylate-amine ligase which exhibits weak glutamate--cysteine ligase activity. In Paraburkholderia phytofirmans (strain DSM 17436 / LMG 22146 / PsJN) (Burkholderia phytofirmans), this protein is Putative glutamate--cysteine ligase 2.